The primary structure comprises 165 residues: Ribosome maturation factor RimM (165 aa).

The PRC barrel domain maps to 94–165 (EDEFYIADLN…YVILNYQTKV (72 aa)).

The protein belongs to the RimM family. As to quaternary structure, binds ribosomal protein uS19.

It is found in the cytoplasm. Its function is as follows. An accessory protein needed during the final step in the assembly of 30S ribosomal subunit, possibly for assembly of the head region. Essential for efficient processing of 16S rRNA. May be needed both before and after RbfA during the maturation of 16S rRNA. It has affinity for free ribosomal 30S subunits but not for 70S ribosomes. This Rickettsia typhi (strain ATCC VR-144 / Wilmington) protein is Ribosome maturation factor RimM.